The sequence spans 173 residues: Transcription factor E (173 aa).

An HTH TFE/IIEalpha-type domain is found at 9–92 (ADKAIFAYLH…LWELELDNMY (84 aa)).

This sequence belongs to the TFE family. In terms of assembly, monomer. Interaction with RNA polymerase subunits RpoF and RpoE is necessary for Tfe stimulatory transcription activity. Able to interact with Tbp and RNA polymerase in the absence of DNA promoter. Interacts both with the preinitiation and elongation complexes.

In terms of biological role, transcription factor that plays a role in the activation of archaeal genes transcribed by RNA polymerase. Facilitates transcription initiation by enhancing TATA-box recognition by TATA-box-binding protein (Tbp), and transcription factor B (Tfb) and RNA polymerase recruitment. Not absolutely required for transcription in vitro, but particularly important in cases where Tbp or Tfb function is not optimal. It dynamically alters the nucleic acid-binding properties of RNA polymerases by stabilizing the initiation complex and destabilizing elongation complexes. Seems to translocate with the RNA polymerase following initiation and acts by binding to the non template strand of the transcription bubble in elongation complexes. The sequence is that of Transcription factor E from Methanospirillum hungatei JF-1 (strain ATCC 27890 / DSM 864 / NBRC 100397 / JF-1).